The sequence spans 281 residues: 2-dehydro-3-deoxyphosphooctonate aldolase (281 aa).

Belongs to the KdsA family.

Its subcellular location is the cytoplasm. It catalyses the reaction D-arabinose 5-phosphate + phosphoenolpyruvate + H2O = 3-deoxy-alpha-D-manno-2-octulosonate-8-phosphate + phosphate. It functions in the pathway carbohydrate biosynthesis; 3-deoxy-D-manno-octulosonate biosynthesis; 3-deoxy-D-manno-octulosonate from D-ribulose 5-phosphate: step 2/3. The protein operates within bacterial outer membrane biogenesis; lipopolysaccharide biosynthesis. In Pseudomonas paraeruginosa (strain DSM 24068 / PA7) (Pseudomonas aeruginosa (strain PA7)), this protein is 2-dehydro-3-deoxyphosphooctonate aldolase.